A 189-amino-acid polypeptide reads, in one-letter code: Protein GrpE (189 aa).

A disordered region spans residues 1 to 24; that stretch reads MADEQNLDTQNPEAQAAENAAPSD. Over residues 10-24 the composition is skewed to low complexity; sequence QNPEAQAAENAAPSD.

It belongs to the GrpE family. In terms of assembly, homodimer.

It is found in the cytoplasm. Participates actively in the response to hyperosmotic and heat shock by preventing the aggregation of stress-denatured proteins, in association with DnaK and GrpE. It is the nucleotide exchange factor for DnaK and may function as a thermosensor. Unfolded proteins bind initially to DnaJ; upon interaction with the DnaJ-bound protein, DnaK hydrolyzes its bound ATP, resulting in the formation of a stable complex. GrpE releases ADP from DnaK; ATP binding to DnaK triggers the release of the substrate protein, thus completing the reaction cycle. Several rounds of ATP-dependent interactions between DnaJ, DnaK and GrpE are required for fully efficient folding. The polypeptide is Protein GrpE (Ectopseudomonas mendocina (strain ymp) (Pseudomonas mendocina)).